Consider the following 232-residue polypeptide: Ashwin (232 aa).

S112, S182, S184, S189, and S193 each carry phosphoserine. Residues 163–232 form a disordered region; sequence KMEHNNNDTQ…KRKIQHVTWP (70 aa). T197 and T198 each carry phosphothreonine. Residues 206–224 are compositionally biased toward basic and acidic residues; that stretch reads APKEEAEATNHLKPPEVKR.

The protein belongs to the ashwin family. As to quaternary structure, component of the tRNA-splicing ligase complex.

The protein resides in the nucleus. This chain is Ashwin, found in Mus musculus (Mouse).